The sequence spans 854 residues: Probable disease resistance protein At1g51480 (854 aa).

Positions 25–62 form a coiled coil; the sequence is RNYIHKMEANLDDLHTTMEELKNGRDDLLRRVSIEEDK. One can recognise an NB-ARC domain in the interval 138–441; it reads AHKIPVPKVE…CEGYINPNRY (304 aa). 180 to 187 is a binding site for ATP; sequence GMGGVGKT. 6 LRR repeats span residues 514 to 535, 536 to 557, 560 to 582, 584 to 605, 607 to 629, and 631 to 652; these read IVRQ…SKCS, NLST…FFLF, KLVV…ISNL, SLQY…MKKL, KLIY…SATL, and NLQV…MEEL.

The protein belongs to the disease resistance NB-LRR family.

Functionally, probable disease resistance protein. In Arabidopsis thaliana (Mouse-ear cress), this protein is Probable disease resistance protein At1g51480.